Consider the following 106-residue polypeptide: Replication restart protein PriB (106 aa).

In terms of domain architecture, SSB spans 4-103 (MNRLVLSGTV…LHAEQIELID (100 aa)).

The protein belongs to the PriB family. As to quaternary structure, homodimer. Interacts with PriA and DnaT. Component of the replication restart primosome. Primosome assembly occurs via a 'hand-off' mechanism. PriA binds to replication forks, subsequently PriB then DnaT bind; DnaT then displaces ssDNA to generate the helicase loading substrate.

In terms of biological role, involved in the restart of stalled replication forks, which reloads the replicative helicase on sites other than the origin of replication; the PriA-PriB pathway is the major replication restart pathway. During primosome assembly it facilitates complex formation between PriA and DnaT on DNA; stabilizes PriA on DNA. Stimulates the DNA unwinding activity of PriA helicase. This is Replication restart protein PriB from Pectobacterium atrosepticum (strain SCRI 1043 / ATCC BAA-672) (Erwinia carotovora subsp. atroseptica).